Here is a 200-residue protein sequence, read N- to C-terminus: MIGRIVGTLIEKTPPELMVDVNGIGYEVSASMTTIYDLPQIGGQVTLFTHLLVKEDSHTLYGFIDKNERALFRVLIKVNGIGPKMALAILSSMSSEELITNVQESDVTALTRIPGVGKKTAERLIIELRDKLGQAAKTDLFSAPAVLRQVQADPRQEAEAALISLGYKPQEAAKAIAGVPVDAANSEDVIKAALKGMLRK.

The domain I stretch occupies residues 1–64; the sequence is MIGRIVGTLI…EDSHTLYGFI (64 aa). The interval 65–143 is domain II; it reads DKNERALFRV…QAAKTDLFSA (79 aa). Residues 144-149 form a flexible linker region; it reads PAVLRQ. The tract at residues 150–200 is domain III; it reads VQADPRQEAEAALISLGYKPQEAAKAIAGVPVDAANSEDVIKAALKGMLRK.

This sequence belongs to the RuvA family. As to quaternary structure, homotetramer. Forms an RuvA(8)-RuvB(12)-Holliday junction (HJ) complex. HJ DNA is sandwiched between 2 RuvA tetramers; dsDNA enters through RuvA and exits via RuvB. An RuvB hexamer assembles on each DNA strand where it exits the tetramer. Each RuvB hexamer is contacted by two RuvA subunits (via domain III) on 2 adjacent RuvB subunits; this complex drives branch migration. In the full resolvosome a probable DNA-RuvA(4)-RuvB(12)-RuvC(2) complex forms which resolves the HJ.

It is found in the cytoplasm. The RuvA-RuvB-RuvC complex processes Holliday junction (HJ) DNA during genetic recombination and DNA repair, while the RuvA-RuvB complex plays an important role in the rescue of blocked DNA replication forks via replication fork reversal (RFR). RuvA specifically binds to HJ cruciform DNA, conferring on it an open structure. The RuvB hexamer acts as an ATP-dependent pump, pulling dsDNA into and through the RuvAB complex. HJ branch migration allows RuvC to scan DNA until it finds its consensus sequence, where it cleaves and resolves the cruciform DNA. This Marinomonas sp. (strain MWYL1) protein is Holliday junction branch migration complex subunit RuvA.